The sequence spans 910 residues: DNA mismatch repair protein MutS (910 aa).

Residues 1–11 are compositionally biased toward basic and acidic residues; it reads MEAKVEEKEPE. A disordered region spans residues 1–21; sequence MEAKVEEKEPEPVENAGPDAP. 658–665 contacts ATP; the sequence is GPNMGGKS.

Belongs to the DNA mismatch repair MutS family.

Functionally, this protein is involved in the repair of mismatches in DNA. It is possible that it carries out the mismatch recognition step. This protein has a weak ATPase activity. This chain is DNA mismatch repair protein MutS, found in Brucella melitensis biotype 1 (strain ATCC 23456 / CCUG 17765 / NCTC 10094 / 16M).